Reading from the N-terminus, the 116-residue chain is Protein RALF-like 33 (116 aa).

The signal sequence occupies residues 1-23 (MRGLSTKPVAIIIAILTVHFLFA). Positions 24–67 (AVTSQSSGDFVPIESKCNGTIAECSLSTAEEEFEMDSEINRRIL) are cleaved as a propeptide — removed in mature form. Asparagine 41 carries N-linked (GlcNAc...) asparagine glycosylation. Cystine bridges form between cysteine 85–cysteine 95 and cysteine 108–cysteine 114.

This sequence belongs to the plant rapid alkalinization factor (RALF) family. Post-translationally, proteolytically cleaved, probably by S1P, a subtilisin-like serine protease (subtilase). Expressed in roots, stems, leaves and plants.

It localises to the secreted. Cell signaling peptide that may regulate plant stress, growth, and development. Mediates a rapid alkalinization of extracellular space by mediating a transient increase in the cytoplasmic Ca(2+) concentration leading to a calcium-dependent signaling events through a cell surface receptor and a concomitant activation of some intracellular mitogen-activated protein kinases. The polypeptide is Protein RALF-like 33 (RALFL33) (Arabidopsis thaliana (Mouse-ear cress)).